The following is a 616-amino-acid chain: Proline--tRNA ligase (616 aa).

This sequence belongs to the class-II aminoacyl-tRNA synthetase family. ProS type 1 subfamily. Homodimer.

The protein localises to the cytoplasm. The enzyme catalyses tRNA(Pro) + L-proline + ATP = L-prolyl-tRNA(Pro) + AMP + diphosphate. Catalyzes the attachment of proline to tRNA(Pro) in a two-step reaction: proline is first activated by ATP to form Pro-AMP and then transferred to the acceptor end of tRNA(Pro). As ProRS can inadvertently accommodate and process non-cognate amino acids such as alanine and cysteine, to avoid such errors it has two additional distinct editing activities against alanine. One activity is designated as 'pretransfer' editing and involves the tRNA(Pro)-independent hydrolysis of activated Ala-AMP. The other activity is designated 'posttransfer' editing and involves deacylation of mischarged Ala-tRNA(Pro). The misacylated Cys-tRNA(Pro) is not edited by ProRS. The polypeptide is Proline--tRNA ligase (Streptococcus mutans serotype c (strain ATCC 700610 / UA159)).